The primary structure comprises 469 residues: Diaminopimelate decarboxylase (469 aa).

The interval 1–23 is disordered; it reads MLSTEMPLPTTGSTLLKTPASPS. An N6-(pyridoxal phosphate)lysine modification is found at Lys-93. Pyridoxal 5'-phosphate is bound by residues Gly-279 and 321-324; that span reads EPGR. Residues Arg-324, Arg-361, and Tyr-365 each coordinate substrate. Cys-392 serves as the catalytic Proton donor. The substrate site is built by Glu-393 and Tyr-421. Tyr-421 provides a ligand contact to pyridoxal 5'-phosphate.

This sequence belongs to the Orn/Lys/Arg decarboxylase class-II family. LysA subfamily. Homodimer. Pyridoxal 5'-phosphate serves as cofactor.

It carries out the reaction meso-2,6-diaminopimelate + H(+) = L-lysine + CO2. It functions in the pathway amino-acid biosynthesis; L-lysine biosynthesis via DAP pathway; L-lysine from DL-2,6-diaminopimelate: step 1/1. Functionally, specifically catalyzes the decarboxylation of meso-diaminopimelate (meso-DAP) to L-lysine. The sequence is that of Diaminopimelate decarboxylase from Synechocystis sp. (strain ATCC 27184 / PCC 6803 / Kazusa).